The primary structure comprises 193 residues: Cuticle protein 18.7 (193 aa).

Its function is as follows. Component of the cuticle of migratory locust which contains more than 100 different structural proteins. This chain is Cuticle protein 18.7, found in Locusta migratoria (Migratory locust).